The sequence spans 349 residues: 26S proteasome non-ATPase regulatory subunit 4 (349 aa).

A VWFA domain is found at 5–188 (ATIVCLDNSE…LSDIILQSPI (184 aa)). Residues 204–223 (DTDPDLAMALKLSLEEEKQR) enclose the UIM 1 domain. Positions 219–234 (EEKQRQERERKAREEA) are enriched in basic and acidic residues. 2 disordered regions span residues 219-257 (EEKQ…MDVN) and 274-349 (TDKM…NEKK). Over residues 235–253 (NGGSTNSGTTTTTAPTESN) the composition is skewed to low complexity. Residues 259–278 (EDDPELAEALALSMATDKME) enclose the UIM 2 domain. The segment covering 280-301 (QSSTTNTDSQPPQQQQQPPTDD) has biased composition (low complexity). Residues 335 to 349 (LSKKDEDKDKDNEKK) are compositionally biased toward basic and acidic residues.

This sequence belongs to the proteasome subunit S5A family. As to quaternary structure, the 26S proteasome is composed of a core protease, known as the 20S proteasome, capped at one or both ends by the 19S regulatory complex (RC). The RC is composed of at least 18 different subunits in two subcomplexes, the base and the lid, which form the portions proximal and distal to the 20S proteolytic core, respectively.

In terms of biological role, binds and presumably selects ubiquitin-conjugates for destruction. The sequence is that of 26S proteasome non-ATPase regulatory subunit 4 (psmD4) from Dictyostelium discoideum (Social amoeba).